A 564-amino-acid chain; its full sequence is Potassium-transporting ATPase potassium-binding subunit (564 aa).

10 helical membrane passes run 4-24 (YDYL…PWLG), 67-87 (TLAL…VLLL), 135-155 (IGLT…LVAL), 179-199 (LYGL…QGVP), 258-278 (FEVA…GHYV), 286-306 (AIIA…LWSE), 382-402 (AGLY…GLMI), 420-440 (LLVA…AIAA), 487-507 (VMIG…VLAL), and 534-554 (LLLL…LALG).

Belongs to the KdpA family. As to quaternary structure, the system is composed of three essential subunits: KdpA, KdpB and KdpC.

It localises to the cell inner membrane. Part of the high-affinity ATP-driven potassium transport (or Kdp) system, which catalyzes the hydrolysis of ATP coupled with the electrogenic transport of potassium into the cytoplasm. This subunit binds the periplasmic potassium ions and delivers the ions to the membrane domain of KdpB through an intramembrane tunnel. This Pseudomonas entomophila (strain L48) protein is Potassium-transporting ATPase potassium-binding subunit.